We begin with the raw amino-acid sequence, 295 residues long: Probable protein phosphatase 2C 5 (295 aa).

One can recognise a PPM-type phosphatase domain in the interval 23-294; sequence QYAATHMQGW…DNMTCILVLF (272 aa). Mn(2+) is bound by residues Asp57 and Gly58. The interval 151–170 is disordered; that stretch reads NRDGKPFDMSKDHKPDDDQE. Asp237 and Asp285 together coordinate Mn(2+).

Belongs to the PP2C family. Mg(2+) serves as cofactor. The cofactor is Mn(2+).

The protein resides in the membrane. The enzyme catalyses O-phospho-L-seryl-[protein] + H2O = L-seryl-[protein] + phosphate. It catalyses the reaction O-phospho-L-threonyl-[protein] + H2O = L-threonyl-[protein] + phosphate. Enzyme with a broad specificity. In Paramecium tetraurelia, this protein is Probable protein phosphatase 2C 5.